The chain runs to 363 residues: NAD(P)H-quinone oxidoreductase subunit 1, chloroplastic (363 aa).

Helical transmembrane passes span 28–48, 98–118, 129–149, 253–273, 300–320, and 336–356; these read WVFVPILIFIVGITISVLAIV, FSFGPAISVISIILSYSVIPF, IGVFLWIAISSIAPIGLLMSG, FGLFYVASYLNLLVSSLFVTV, VFVTIIGIFITLVKTFLFIFV, and LLNLGWKFLLPISLGNLLLTT.

The protein belongs to the complex I subunit 1 family. As to quaternary structure, NDH is composed of at least 16 different subunits, 5 of which are encoded in the nucleus.

Its subcellular location is the plastid. The protein resides in the chloroplast thylakoid membrane. The enzyme catalyses a plastoquinone + NADH + (n+1) H(+)(in) = a plastoquinol + NAD(+) + n H(+)(out). It catalyses the reaction a plastoquinone + NADPH + (n+1) H(+)(in) = a plastoquinol + NADP(+) + n H(+)(out). In terms of biological role, NDH shuttles electrons from NAD(P)H:plastoquinone, via FMN and iron-sulfur (Fe-S) centers, to quinones in the photosynthetic chain and possibly in a chloroplast respiratory chain. The immediate electron acceptor for the enzyme in this species is believed to be plastoquinone. Couples the redox reaction to proton translocation, and thus conserves the redox energy in a proton gradient. In Phaseolus vulgaris (Kidney bean), this protein is NAD(P)H-quinone oxidoreductase subunit 1, chloroplastic.